The sequence spans 366 residues: Homer protein homolog 1 (366 aa).

The WH1 domain occupies 1–110 (MGEQPIFSTR…EKFQEFKEAA (110 aa)). The residue at position 2 (glycine 2) is an N-acetylglycine. The interval 114-189 (KEKSQEKMEL…RTQGLSHASS (76 aa)) is disordered. Positions 138-147 (SPLTPESING) are enriched in polar residues. Residues 193–364 (KHWEAELATL…LRDNLAKLLE (172 aa)) are a coiled coil. The interval 302-366 (KLQEVEIRNK…DNLAKLLECS (65 aa)) is required for tetramerization. Serine 318 is modified (phosphoserine).

This sequence belongs to the Homer family. In terms of assembly, tetramer; this tetrameric structure is critical for forming the high-order complex with SHANK1, which in turn is necessary for the structural and functional integrity of dendritic spines. Interacts with GRM1, GRM5, ITPR1, DYN3, RYR1, RYR2 and SHANK3. Interacts with IFT57 and OPHN1. Isoform 1 and isoform 2 encode coiled-coil structures that mediate homo- and heteromultimerization. Interacts with SHANK1; forms high-order polymerized complex with a mesh-like network structure, at least composed of SHANK1, HOMER1 and DLGAP1; the complex formation is SHANK1 multimerization dependent. Interacts with NFATC4. Interacts with DAGLA (via PPXXF motif); this interaction is required for the cell membrane localization of DAGLA. Interacts with SRGAP2. As to expression, highly expressed in cortex, Purkinje cells of the cerebellum, hippocampus, striatum and olfactory bulb. Isoform 1 and isoform 3 are expressed in skeletal and cardiac muscle.

The protein resides in the cytoplasm. Its subcellular location is the postsynaptic density. It localises to the synapse. It is found in the cell projection. The protein localises to the dendritic spine. Postsynaptic density scaffolding protein. Binds and cross-links cytoplasmic regions of GRM1, GRM5, ITPR1, DNM3, RYR1, RYR2, SHANK1 and SHANK3. By physically linking GRM1 and GRM5 with ER-associated ITPR1 receptors, it aids the coupling of surface receptors to intracellular calcium release. May also couple GRM1 to PI3 kinase through its interaction with AGAP2. Differentially regulates the functions of the calcium activated channel ryanodine receptors RYR1 and RYR2. Isoform 1 decreases the activity of RYR2, and increases the activity of RYR1, whereas isoform 3 counteracts the effects by competing for binding sites. Isoform 1 regulates the trafficking and surface expression of GRM5. Isoform 3 acts as a natural dominant negative, in dynamic competition with constitutively expressed isoform 1, and isoform 2 to regulate synaptic metabotropic glutamate function. Isoform 3, may be involved in the structural changes that occur at synapses during long-lasting neuronal plasticity and development. Forms a high-order complex with SHANK1, which in turn is necessary for the structural and functional integrity of dendritic spines. Negatively regulates T cell activation by inhibiting the calcineurin-NFAT pathway. Acts by competing with calcineurin/PPP3CA for NFAT protein binding, hence preventing NFAT activation by PPP3CA. The protein is Homer protein homolog 1 of Rattus norvegicus (Rat).